Here is a 518-residue protein sequence, read N- to C-terminus: Metal transporter Nramp1 (518 aa).

Helical transmembrane passes span 35 to 55 (FLSHIGPGFMVCLAYLDPGNM), 68 to 88 (ELLWVILIGLIFALIIQSLSA), 107 to 127 (PVWVKTCLWLLAELAVIASDI), 131 to 151 (IGTGFAFNLLFHIPVWTGVLI), 172 to 192 (VVVALLVFVMAGCFFVEMSIV), 218 to 238 (IALLGALVMPHNLFLHSALVL), 255 to 275 (FFLFESGIALFVALLVNIAII), 315 to 337 (SATVYGVALLASGQSSTITGTYA), 357 to 377 (LMTRSIAIVPSLIVSIIGGSS), 382 to 402 (LIVIASMILSFELPFALIPLL), 418 to 438 (IYIVGFSWVLGFVIIGINIYF), and 458 to 478 (VLIGIVLFPLMLLYVVAVIYL).

It belongs to the NRAMP (TC 2.A.55) family.

The protein resides in the membrane. In terms of biological role, probable metal transporter that may participate in the control of iron homeostasis. This chain is Metal transporter Nramp1 (NRAMP1), found in Oryza sativa subsp. japonica (Rice).